The chain runs to 39 residues: Pro-opiomelanocortin (39 aa).

V13 carries the post-translational modification Valine amide.

The protein belongs to the POMC family.

It is found in the secreted. In terms of biological role, precursor protein for pituitary hormones that regulate stress and environmental adaptation. Stimulates the adrenal glands to release cortisol. Its function is as follows. Anorexigenic peptide. Increases the pigmentation of skin by increasing melanin production in melanocytes. This Struthio camelus (Common ostrich) protein is Pro-opiomelanocortin (POMC).